We begin with the raw amino-acid sequence, 445 residues long: Signal recognition particle 54 kDa protein (445 aa).

Residues 106–113 (GLQGSGKT), 186–190 (DTAGR), and 244–247 (TKLD) each bind GTP.

The protein belongs to the GTP-binding SRP family. SRP54 subfamily. Part of the signal recognition particle protein translocation system, which is composed of SRP and FtsY. Archaeal SRP consists of a 7S RNA molecule of 300 nucleotides and two protein subunits: SRP54 and SRP19.

It is found in the cytoplasm. It carries out the reaction GTP + H2O = GDP + phosphate + H(+). Functionally, involved in targeting and insertion of nascent membrane proteins into the cytoplasmic membrane. Binds to the hydrophobic signal sequence of the ribosome-nascent chain (RNC) as it emerges from the ribosomes. The SRP-RNC complex is then targeted to the cytoplasmic membrane where it interacts with the SRP receptor FtsY. In Methanobrevibacter smithii (strain ATCC 35061 / DSM 861 / OCM 144 / PS), this protein is Signal recognition particle 54 kDa protein.